A 99-amino-acid polypeptide reads, in one-letter code: Integration host factor subunit alpha (99 aa).

This sequence belongs to the bacterial histone-like protein family. In terms of assembly, heterodimer of an alpha and a beta chain.

This protein is one of the two subunits of integration host factor, a specific DNA-binding protein that functions in genetic recombination as well as in transcriptional and translational control. In Xanthomonas axonopodis pv. citri (strain 306), this protein is Integration host factor subunit alpha (ihfA).